The sequence spans 310 residues: 2-ketogluconate reductase (310 aa).

Residues 151 to 152 (HI) and 227 to 229 (IAR) each bind NADP(+). Active-site residues include arginine 229 and glutamate 258. Catalysis depends on histidine 276, which acts as the Proton donor.

Belongs to the D-isomer specific 2-hydroxyacid dehydrogenase family. Homohexamer.

The enzyme catalyses D-gluconate + NADP(+) = 2-dehydro-D-gluconate + NADPH + H(+). In terms of biological role, catalyzes the reduction of 2-keto-D-gluconate to gluconate. Can also catalyze the reduction of 2-keto-L-gulonate. Can use both NADH and NADPH efficiently, with a slight preference for NADPH. The sequence is that of 2-ketogluconate reductase from Gluconobacter oxydans (strain 621H) (Gluconobacter suboxydans).